We begin with the raw amino-acid sequence, 96 residues long: Co-chaperonin GroES (96 aa).

Belongs to the GroES chaperonin family. As to quaternary structure, heptamer of 7 subunits arranged in a ring. Interacts with the chaperonin GroEL.

The protein localises to the cytoplasm. Together with the chaperonin GroEL, plays an essential role in assisting protein folding. The GroEL-GroES system forms a nano-cage that allows encapsulation of the non-native substrate proteins and provides a physical environment optimized to promote and accelerate protein folding. GroES binds to the apical surface of the GroEL ring, thereby capping the opening of the GroEL channel. The chain is Co-chaperonin GroES from Shewanella baltica (strain OS223).